A 187-amino-acid polypeptide reads, in one-letter code: MRRLSSQLMCTAAAVRFASAGGAKKYDLFGYEVDTNTAPWIEKVKKCRYYDEAGEVLVSMNVKNCPPDLETYNATLQKIFEAPSKQEKPVENESKFCAMMDLMEEMQHRNKVKPNEESWTWVMKECVQSGQFRLGYCVAKLMEAEFKRVPEDLVKQNEANAAKAKADGKEHPSTLAQQQSLFDIKIQ.

The N-terminal 17 residues, 1-17 (MRRLSSQLMCTAAAVRF), are a transit peptide targeting the mitochondrion. The segment at 160-187 (NAAKAKADGKEHPSTLAQQQSLFDIKIQ) is disordered.

It is found in the mitochondrion inner membrane. In terms of biological role, putative RNA-binding protein. This Leishmania tarentolae (Sauroleishmania tarentolae) protein is Protein P18, mitochondrial.